Reading from the N-terminus, the 349-residue chain is Putative nuclease HARBI1 (349 aa).

Residues 148-300 form the DDE Tnp4 domain; sequence VDCIHVAIKA…IILACCVLHN (153 aa). 4 residues coordinate a divalent metal cation: Asp-149, Asp-199, Asp-225, and Glu-261.

This sequence belongs to the HARBI1 family. Interacts with NAIF1. A divalent metal cation serves as cofactor. Detected in brain, eye, nerve tissue, kidney and lung.

It localises to the nucleus. Its subcellular location is the cytoplasm. In terms of biological role, transposase-derived protein that may have nuclease activity (Potential). Does not have transposase activity. This is Putative nuclease HARBI1 (HARBI1) from Homo sapiens (Human).